A 440-amino-acid polypeptide reads, in one-letter code: ATP-dependent RNA helicase sub2 (440 aa).

Residues 1 to 16 are compositionally biased toward acidic residues; sequence MSHEEDLIDYSDEELQ. Positions 1–42 are disordered; that stretch reads MSHEEDLIDYSDEELQTTDAAATTAAPASNGEAKKGDLTVSG. Residues 17–28 show a composition bias toward low complexity; it reads TTDAAATTAAPA. The Q motif motif lies at 57-85; that stretch reads TGFRDFLLKEELLRAITDCGFEHPSEVQQ. The 176-residue stretch at 88 to 263 folds into the Helicase ATP-binding domain; the sequence is IPTAILNVDV…KKFMRNPLEV (176 aa). 101–108 contributes to the ATP binding site; that stretch reads AKSGLGKT. Residues 210 to 213 carry the DEAD box motif; the sequence is DECD. One can recognise a Helicase C-terminal domain in the interval 291–436; that stretch reads KLNELLDSLE…EYPEGGVDSS (146 aa).

It belongs to the DEAD box helicase family. DECD subfamily.

It is found in the nucleus. The catalysed reaction is ATP + H2O = ADP + phosphate + H(+). In terms of biological role, ATP-binding RNA helicase involved in transcription elongation and required for the export of mRNA out of the nucleus. SUB2 also plays a role in pre-mRNA splicing and spliceosome assembly. May be involved in rDNA and telomeric silencing, and maintenance of genome integrity. This chain is ATP-dependent RNA helicase sub2 (sub2), found in Aspergillus niger (strain ATCC MYA-4892 / CBS 513.88 / FGSC A1513).